The sequence spans 361 residues: Phosphoserine aminotransferase (361 aa).

Position 43 (R43) interacts with L-glutamate. The pyridoxal 5'-phosphate site is built by W103, T153, D173, and Q196. Residue K197 is modified to N6-(pyridoxal phosphate)lysine. 238 to 239 lines the pyridoxal 5'-phosphate pocket; it reads NT.

The protein belongs to the class-V pyridoxal-phosphate-dependent aminotransferase family. SerC subfamily. As to quaternary structure, homodimer. It depends on pyridoxal 5'-phosphate as a cofactor.

The protein localises to the cytoplasm. The enzyme catalyses O-phospho-L-serine + 2-oxoglutarate = 3-phosphooxypyruvate + L-glutamate. It carries out the reaction 4-(phosphooxy)-L-threonine + 2-oxoglutarate = (R)-3-hydroxy-2-oxo-4-phosphooxybutanoate + L-glutamate. Its pathway is amino-acid biosynthesis; L-serine biosynthesis; L-serine from 3-phospho-D-glycerate: step 2/3. It functions in the pathway cofactor biosynthesis; pyridoxine 5'-phosphate biosynthesis; pyridoxine 5'-phosphate from D-erythrose 4-phosphate: step 3/5. Functionally, catalyzes the reversible conversion of 3-phosphohydroxypyruvate to phosphoserine and of 3-hydroxy-2-oxo-4-phosphonooxybutanoate to phosphohydroxythreonine. The chain is Phosphoserine aminotransferase from Hahella chejuensis (strain KCTC 2396).